Consider the following 665-residue polypeptide: UvrABC system protein C (665 aa).

A GIY-YIG domain is found at E16–V95. The region spanning D208–A243 is the UVR domain. The segment at E470 to G507 is disordered. The segment covering S475–G491 has biased composition (low complexity).

Belongs to the UvrC family. As to quaternary structure, interacts with UvrB in an incision complex.

The protein localises to the cytoplasm. In terms of biological role, the UvrABC repair system catalyzes the recognition and processing of DNA lesions. UvrC both incises the 5' and 3' sides of the lesion. The N-terminal half is responsible for the 3' incision and the C-terminal half is responsible for the 5' incision. In Salinispora tropica (strain ATCC BAA-916 / DSM 44818 / JCM 13857 / NBRC 105044 / CNB-440), this protein is UvrABC system protein C.